The primary structure comprises 580 residues: MRWKHGGPWVLIIIYNMIHHCSSGLERIVSFKLEPGSQVIVFPFIFEGYNIIALPTTKYSDLKKNPKDMKSLTPFFFNASHIIWDFAIGSVIRTPDNRFERLFNERMEGYLKDISVNVLKMYVKGNKTISELLEAVYERIFRCDEKGGGHMMKYIEDVIKGFDDMIENVPTEMDSERKEIYHRFWSGSRKYVESFYSIERLKHLVELEKMVCSACREICLGLKEEKLMGLFAEGSMRKALKAKLGEEEASRRGYLEYAIINDEILLDAHREHTGEVTKELVMQMLLGKNGEEIDRRYIGKVANVVKERQKRREREMEKSMKELLRDEEKAKSKKGRKKKSVGVSETKKEESETEEVEASEEMEISSVEVGGARRKTGKKSKGGRKCFKIHRRVLRWRKSPEKIKEELDRGREERWRGKSLEYIKEQKVLHDIAGVLELLRSEDADKFFMDTGEHSKGGSSRRRLMAIGVLEVGRRRMTGVVEAGTFKDSSGCTVLYHLMFRVTGIEEIGSVMSPEFAEANDIEKIDEDEECQDAGKFVYPKGVRFETVKDDDAFQIVWRNPSDTSEVLQGLTIQRRPYVI.

Residues 308-330 show a composition bias toward basic and acidic residues; sequence RQKRREREMEKSMKELLRDEEKA. A disordered region spans residues 308 to 384; the sequence is RQKRREREME…KTGKKSKGGR (77 aa). The segment covering 331 to 340 has biased composition (basic residues); sequence KSKKGRKKKS. Acidic residues predominate over residues 351–363; the sequence is SETEEVEASEEME. The span at 372-384 shows a compositional bias: basic residues; it reads ARRKTGKKSKGGR.

The protein belongs to the UPF0329 family.

The chain is UPF0329 protein ECU06_0080 from Encephalitozoon cuniculi (strain GB-M1) (Microsporidian parasite).